We begin with the raw amino-acid sequence, 493 residues long: EGF-containing fibulin-like extracellular matrix protein 1 (493 aa).

The N-terminal stretch at 1–17 (MLQTLFLTMLTLALVKS) is a signal peptide. The EGF-like 1; atypical domain occupies 26–71 (YTQCTDGYEWDPIRQQCKDIDECDIVPDACKGGMKCVNHYGGYLCL). Positions 173–213 (DIDECTSGTHNCRTDQVCINLRGSFTCQCLPGYQKRGEQCV) constitute an EGF-like 2; calcium-binding domain. Intrachain disulfides connect Cys177-Cys190, Cys184-Cys199, Cys201-Cys212, Cys218-Cys228, Cys224-Cys237, Cys239-Cys252, Cys258-Cys268, Cys264-Cys277, Cys279-Cys292, Cys298-Cys309, Cys305-Cys318, Cys320-Cys332, Cys338-Cys350, Cys344-Cys359, and Cys365-Cys377. Positions 214 to 253 (DIDECTVPPYCHQRCVNTPGSFYCQCSPGFQLAANNYTCV) constitute an EGF-like 3; calcium-binding domain. Residue Asn249 is glycosylated (N-linked (GlcNAc...) asparagine). Positions 254–293 (DINECDASNQCAQQCYNILGSFICQCNQGYELSSDRLNCE) constitute an EGF-like 4; calcium-binding domain. Residues 259–493 (DASNQCAQQC…LTIIVGPFSF (235 aa)) are mediates interaction with TIMP3. An EGF-like 5; calcium-binding domain is found at 294 to 333 (DIDECRTSSYLCQYQCVNEPGKFSCMCPQGYEVVRSRTCQ). Positions 334-378 (DINECETTNECREDEMCWNYHGGFRCYPRNPCQDHYVLTSENRCV) constitute an EGF-like 6; calcium-binding domain.

Belongs to the fibulin family. Interacts with ECM1. Interacts with TIMP3. In terms of tissue distribution, expressed in the eye in the ciliary body, cornea, inner nuclear layer of the retina, and in the optic disk.

Its subcellular location is the secreted. The protein resides in the extracellular space. It localises to the extracellular matrix. Its function is as follows. Binds EGFR, the EGF receptor, inducing EGFR autophosphorylation and the activation of downstream signaling pathways. May play a role in cell adhesion and migration. May function as a negative regulator of chondrocyte differentiation. In the olfactory epithelium, it may regulate glial cell migration, differentiation and the ability of glial cells to support neuronal neurite outgrowth. This is EGF-containing fibulin-like extracellular matrix protein 1 (Efemp1) from Mus musculus (Mouse).